The primary structure comprises 297 residues: N-acetylmuramic acid 6-phosphate etherase (297 aa).

The 164-residue stretch at 55–218 (ATDALKSGGR…STGAMVKFGK (164 aa)) folds into the SIS domain. Glu83 acts as the Proton donor in catalysis. Glu114 is a catalytic residue.

The protein belongs to the GCKR-like family. MurNAc-6-P etherase subfamily. In terms of assembly, homodimer.

It carries out the reaction N-acetyl-D-muramate 6-phosphate + H2O = N-acetyl-D-glucosamine 6-phosphate + (R)-lactate. It functions in the pathway amino-sugar metabolism; 1,6-anhydro-N-acetylmuramate degradation. The protein operates within amino-sugar metabolism; N-acetylmuramate degradation. Its pathway is cell wall biogenesis; peptidoglycan recycling. Functionally, specifically catalyzes the cleavage of the D-lactyl ether substituent of MurNAc 6-phosphate, producing GlcNAc 6-phosphate and D-lactate. Together with AnmK, is also required for the utilization of anhydro-N-acetylmuramic acid (anhMurNAc) either imported from the medium or derived from its own cell wall murein, and thus plays a role in cell wall recycling. The polypeptide is N-acetylmuramic acid 6-phosphate etherase (Enterobacter sp. (strain 638)).